The primary structure comprises 467 residues: Methylenetetrahydrofolate--tRNA-(uracil-5-)-methyltransferase TrmFO (467 aa).

10–15 (GGGMAG) serves as a coordination point for FAD.

Belongs to the MnmG family. TrmFO subfamily. FAD serves as cofactor.

It is found in the cytoplasm. The catalysed reaction is uridine(54) in tRNA + (6R)-5,10-methylene-5,6,7,8-tetrahydrofolate + NADH + H(+) = 5-methyluridine(54) in tRNA + (6S)-5,6,7,8-tetrahydrofolate + NAD(+). It carries out the reaction uridine(54) in tRNA + (6R)-5,10-methylene-5,6,7,8-tetrahydrofolate + NADPH + H(+) = 5-methyluridine(54) in tRNA + (6S)-5,6,7,8-tetrahydrofolate + NADP(+). Functionally, catalyzes the folate-dependent formation of 5-methyl-uridine at position 54 (M-5-U54) in all tRNAs. The polypeptide is Methylenetetrahydrofolate--tRNA-(uracil-5-)-methyltransferase TrmFO (Hyphomonas neptunium (strain ATCC 15444)).